A 322-amino-acid chain; its full sequence is MMLPSVIAPPAMYPSFLRPSSALSLPPALQSAFTTHSSFLVEDLLRISRPAAFMHRSIPSPSASPPATGVTTLNTTSSAVHVAMSTALAKRSSSPQTSISSDPNYLKFGVNAILASTTRNASPPPPVQGMNAKTFPFPCFDGSFHPFIRASYFPASSSAVPIPGTFAWPLTARGKPRRGMLRRAVFSDVQRKALEKMFQKQKYISKPDRKKLATKLGLKDSQVKIWFQNRRMKWRNSKERELLSSGGCREQTLPTKMNPNPDLSDVGKRFEHEAVLRESPRAPFCQSRGDHEFNADLHFKSPSISSKHSDFSESEDEEITVS.

A DNA-binding region (homeobox) is located at residues 179–238; that stretch reads GMLRRAVFSDVQRKALEKMFQKQKYISKPDRKKLATKLGLKDSQVKIWFQNRRMKWRNSK. Disordered regions lie at residues 238-266 and 296-322; these read KERE…LSDV and DLHF…ITVS. Acidic residues predominate over residues 312-322; the sequence is SESEDEEITVS.

It belongs to the H2.0 homeobox family.

It localises to the nucleus. The sequence is that of Homeobox protein DBX1-B (dbx1b) from Danio rerio (Zebrafish).